Consider the following 64-residue polypeptide: U6-theraphotoxin-Cg1a (64 aa).

A signal peptide spans 1 to 20 (MTRKILAVLLVFTLVACNNA). A propeptide spanning residues 21–38 (EKYSETDVEDSPMIQERR) is cleaved from the precursor. Disulfide bonds link C39–C55, C46–C58, and C54–C63.

It belongs to the neurotoxin 36 family. 02 subfamily. Expressed by the venom gland.

The protein resides in the secreted. In terms of biological role, probable ion channel inhibitor. The sequence is that of U6-theraphotoxin-Cg1a from Chilobrachys guangxiensis (Chinese earth tiger tarantula).